Consider the following 198-residue polypeptide: MSNITGLTNKIIEDAKVSSKEIMDDAKKKEKIIIDEKVSIAENERKLILSKAEEESKVRAGRIISNANLQVRDMKLSAKIEVLDNVFNAAVEELSRMTGGELLNFIKNTILLLDIDGDEEIIVGENEDRVTTEFINEINKELNAKGKLGKIKLSQKRIKIKGGYILAKNGIEINNTFESRVKSLRDDMEAEVAKVLFS.

It belongs to the V-ATPase E subunit family.

Its function is as follows. Produces ATP from ADP in the presence of a proton gradient across the membrane. This is V-type ATP synthase subunit E from Clostridium novyi (strain NT).